We begin with the raw amino-acid sequence, 387 residues long: MDEPWWEGRVASDVHCTLREKELKLPTFRAHSPLLKSRRFFVDILTLLSRHCHLCPSARHLAIYLLDHFMDQYNITTSKQLYTVAVSCLLLASKFEDREDRVPKLEQINNTRILSSQNFSLTKKELLTTELLLLEAFSWDLCLPTPAHFLDYYLLASISQKDHHCHAWPTTCLRKTKECLKEYAHYFLEVTLQDHIFYKFQPSVVAAACVGASRICLQLSPYWTRDLQRVSSYSLEHLSTCIEILLVAYDNVLKDAVAVKSQTLAMVPGSSSAPAQVLFQPPTYPTLSQPPPTTLAQFQSPAQDLCLAYRDSLQAHRSGGLLSGDTGPSLHTPYPTLQPLDMCPVPVPASLSMQMAIAAEPRHCLTASYGSSYFSGSHMFPAGCFDS.

Residues 13 to 142 enclose the Cyclin N-terminal domain; the sequence is DVHCTLREKE…LLEAFSWDLC (130 aa).

The protein belongs to the cyclin family. Cyclin J subfamily.

In Mus musculus (Mouse), this protein is Cyclin-J-like protein (Ccnjl).